The following is a 380-amino-acid chain: Aprataxin (380 aa).

The 50-residue stretch at 36–85 (PVIIGRTPELGITDKLCSRSQLELTSNCYKRYVLVKRLGANTSQINGIDI) folds into the FHA-like domain. The segment at 176-207 (VYAFDSPSPMSSRCEKKAESNKRAPTHKHWSQ) is disordered. The span at 188–197 (RCEKKAESNK) shows a compositional bias: basic and acidic residues. The region spanning 206–312 (SQGLKASMED…ISQDFQSSSF (107 aa)) is the HIT domain. Interaction with DNA substrate regions lie at residues 231 to 235 (DKYPK) and 294 to 295 (SM). The Histidine triad motif signature appears at 297 to 301 (QMHMH). Residue H299 is the Tele-AMP-histidine intermediate of the active site. The C2H2-type; atypical zinc-finger motif lies at 356–378 (LKCHRCKKPQKNIPTLKKHIDSC).

Its subcellular location is the nucleus. It localises to the nucleoplasm. It is found in the nucleolus. It catalyses the reaction a 5'-end adenosine-5'-diphospho-5'-2'-deoxyribonucleoside-DNA + H2O = a 5'-end 5'-phospho-2'-deoxyribonucleoside-DNA + AMP + 2 H(+). The catalysed reaction is a 5'-end adenosine-5'-diphospho-5'-ribonucleoside-2'-deoxyribonucleotide-DNA + H2O = a 5'-end 5'-phospho-ribonucleoside-2'-deoxyribonucleotide-DNA + AMP + 2 H(+). The enzyme catalyses a 3'-end 2'-deoxyribonucleotide-3'-diphospho-5'-guanosine-DNA + H2O = a 3'-end 2'-deoxyribonucleotide 3'-phosphate-DNA + GMP + 2 H(+). Its function is as follows. DNA-binding protein involved in single-strand DNA break repair, double-strand DNA break repair and base excision repair. Resolves abortive DNA ligation intermediates formed either at base excision sites, or when DNA ligases attempt to repair non-ligatable breaks induced by reactive oxygen species. Catalyzes the release of adenylate groups covalently linked to 5'-phosphate termini, resulting in the production of 5'-phosphate termini that can be efficiently rejoined. Also able to hydrolyze adenosine 5'-monophosphoramidate (AMP-NH(2)) and diadenosine tetraphosphate (AppppA), but with lower catalytic activity. Likewise, catalyzes the release of 3'-linked guanosine (DNAppG) and inosine (DNAppI) from DNA, but has higher specific activity with 5'-linked adenosine (AppDNA). The chain is Aprataxin (APTX) from Ciona intestinalis (Transparent sea squirt).